The primary structure comprises 291 residues: 2-C-methyl-D-erythritol 4-phosphate cytidylyltransferase (291 aa).

Positions 1–23 (MTERDFDTPVETPTVQPAPAQGT) are disordered.

It belongs to the IspD/TarI cytidylyltransferase family. IspD subfamily.

It catalyses the reaction 2-C-methyl-D-erythritol 4-phosphate + CTP + H(+) = 4-CDP-2-C-methyl-D-erythritol + diphosphate. Its pathway is isoprenoid biosynthesis; isopentenyl diphosphate biosynthesis via DXP pathway; isopentenyl diphosphate from 1-deoxy-D-xylulose 5-phosphate: step 2/6. Catalyzes the formation of 4-diphosphocytidyl-2-C-methyl-D-erythritol from CTP and 2-C-methyl-D-erythritol 4-phosphate (MEP). The protein is 2-C-methyl-D-erythritol 4-phosphate cytidylyltransferase of Bifidobacterium longum subsp. infantis (strain ATCC 15697 / DSM 20088 / JCM 1222 / NCTC 11817 / S12).